Consider the following 101-residue polypeptide: Small ribosomal subunit protein bS18c (101 aa).

A compositionally biased stretch (basic residues) spans 1-19 (MDKSKRPFRKSKRSFRRRL). Residues 1 to 23 (MDKSKRPFRKSKRSFRRRLPPIG) form a disordered region.

This sequence belongs to the bacterial ribosomal protein bS18 family. As to quaternary structure, part of the 30S ribosomal subunit.

It localises to the plastid. The protein localises to the chloroplast. The sequence is that of Small ribosomal subunit protein bS18c from Ceratophyllum demersum (Rigid hornwort).